Here is a 259-residue protein sequence, read N- to C-terminus: Probable metal transport system ATP-binding protein CT_068 (259 aa).

One can recognise an ABC transporter domain in the interval W9–L241. G41 to S48 is an ATP binding site.

Belongs to the ABC transporter superfamily.

Its subcellular location is the cell inner membrane. Part of an ATP-driven transport system CT_067/CT_068/CT_069/CT_070 for a metal. Probably responsible for energy coupling to the transport system. The polypeptide is Probable metal transport system ATP-binding protein CT_068 (Chlamydia trachomatis serovar D (strain ATCC VR-885 / DSM 19411 / UW-3/Cx)).